The chain runs to 373 residues: MEVASAVAEPDACSLDHYLSLPDHSMDERIAAARARLGASTVLLGHHYQRDEVVRFADFTGDSYKLSKIAAETEAKYVVFCGVHFMAESADVLGRSEQHVILPDLNAGCSMADMAEISQVEACWETLLGAGLGAEQVMPLTYMNSTAAIKAFCGERGGLVCTSSNARKAFEWAFARAEKILFLPDQHLGRNTAFAMGIGLDEMVVFDPWQIGGGVPAEKLRAAKVILWKGHCSVHQRFLPEHVDRVRAKYEGIRVVVHPECRWEVCQKADALGSTERIIAEVEEAPEGTMFAIGTEIHLVNRLAKRFAPLGKKIITLDDTGCLCTTMYRISPQHLAWALENLLEGRVVNQIKVTDEVKHWARVALDRMLEIRG.

The iminosuccinate site is built by His46 and Ser63. Cys109 is a binding site for [4Fe-4S] cluster. Residues 142–144 (YMN) and Ser163 each bind iminosuccinate. A [4Fe-4S] cluster-binding site is contributed by Cys232. Residues 258–260 (HPE) and Thr275 contribute to the iminosuccinate site. Cys324 is a binding site for [4Fe-4S] cluster.

The protein belongs to the quinolinate synthase family. Type 3 subfamily. [4Fe-4S] cluster serves as cofactor.

Its subcellular location is the cytoplasm. It catalyses the reaction iminosuccinate + dihydroxyacetone phosphate = quinolinate + phosphate + 2 H2O + H(+). It functions in the pathway cofactor biosynthesis; NAD(+) biosynthesis; quinolinate from iminoaspartate: step 1/1. Catalyzes the condensation of iminoaspartate with dihydroxyacetone phosphate to form quinolinate. The sequence is that of Quinolinate synthase from Acidobacterium capsulatum (strain ATCC 51196 / DSM 11244 / BCRC 80197 / JCM 7670 / NBRC 15755 / NCIMB 13165 / 161).